Reading from the N-terminus, the 372-residue chain is NAD(P)H-quinone oxidoreductase subunit 1 (372 aa).

Helical transmembrane passes span 27–47 (AIWMPLPMILMLIGATVGVLV), 65–85 (PEYIGPLGLLAPVADGLKLVF), 97–117 (WLFTLGPILVVLPVFLSYLIV), 128–148 (VGTGIFLWIALSSIQPIGLLM), 166–186 (AAQSISYEIPLALSVLAIVMM), 204–224 (ILGWNIWRQPLGFMIFWIAAL), 266–286 (ILSALLVAVLYLGGWDFPIPI), 308–328 (ALGITMTLVKAYFLVFIAILL), and 347–367 (FLLPVGLVNLLLTAALKLAFP).

This sequence belongs to the complex I subunit 1 family. As to quaternary structure, NDH-1 is composed of at least 11 different subunits.

Its subcellular location is the cellular thylakoid membrane. The catalysed reaction is a plastoquinone + NADH + (n+1) H(+)(in) = a plastoquinol + NAD(+) + n H(+)(out). It catalyses the reaction a plastoquinone + NADPH + (n+1) H(+)(in) = a plastoquinol + NADP(+) + n H(+)(out). Its function is as follows. NDH-1 shuttles electrons from an unknown electron donor, via FMN and iron-sulfur (Fe-S) centers, to quinones in the respiratory and/or the photosynthetic chain. The immediate electron acceptor for the enzyme in this species is believed to be plastoquinone. Couples the redox reaction to proton translocation, and thus conserves the redox energy in a proton gradient. The sequence is that of NAD(P)H-quinone oxidoreductase subunit 1 from Nostoc sp. (strain PCC 7120 / SAG 25.82 / UTEX 2576).